We begin with the raw amino-acid sequence, 379 residues long: uncharacterized protein (379 aa).

Disordered regions lie at residues Met-1–Thr-37, Val-130–Glu-150, and Asn-332–Arg-379.

It belongs to the chlamydial CPn_0499/CT_392/TC_0671 family.

This is an uncharacterized protein from Chlamydia muridarum (strain MoPn / Nigg).